The primary structure comprises 350 residues: Phenylalanine--tRNA ligase alpha subunit (350 aa).

Residue E259 coordinates Mg(2+).

It belongs to the class-II aminoacyl-tRNA synthetase family. Phe-tRNA synthetase alpha subunit type 1 subfamily. As to quaternary structure, tetramer of two alpha and two beta subunits. Mg(2+) serves as cofactor.

Its subcellular location is the cytoplasm. It catalyses the reaction tRNA(Phe) + L-phenylalanine + ATP = L-phenylalanyl-tRNA(Phe) + AMP + diphosphate + H(+). This is Phenylalanine--tRNA ligase alpha subunit (pheS) from Rickettsia prowazekii (strain Madrid E).